Here is a 110-residue protein sequence, read N- to C-terminus: UPF0122 protein GWCH70_1086 (110 aa).

It belongs to the UPF0122 family.

Functionally, might take part in the signal recognition particle (SRP) pathway. This is inferred from the conservation of its genetic proximity to ftsY/ffh. May be a regulatory protein. This chain is UPF0122 protein GWCH70_1086, found in Geobacillus sp. (strain WCH70).